A 120-amino-acid polypeptide reads, in one-letter code: MRMNVFEMEGFLRGKCVPRDLKVNETNAEYLVRKFDALEAKCAALENKIIPVSAELPPANESVLLFDANGEGWLIGWRSLWYTWGQKETGEWQWTFQVGDLENVNITHWAVMPKAPEAGA.

This sequence to the N-terminal region of phage HK97/HK620 Gp37/hpaH.

This is an uncharacterized protein from Escherichia coli (strain K12).